Here is a 111-residue protein sequence, read N- to C-terminus: T cell receptor beta variable 29-1 (111 aa).

The signal sequence occupies residues Met1 to Ser16. The Ig-like domain maps to Ala17–Glu111. The cysteines at positions 38 and 108 are disulfide-linked. An N-linked (GlcNAc...) asparagine glycan is attached at Asn87.

As to quaternary structure, alpha-beta TR is a heterodimer composed of an alpha and beta chain; disulfide-linked. The alpha-beta TR is associated with the transmembrane signaling CD3 coreceptor proteins to form the TR-CD3 (TcR or TCR). The assembly of alpha-beta TR heterodimers with CD3 occurs in the endoplasmic reticulum where a single alpha-beta TR heterodimer associates with one CD3D-CD3E heterodimer, one CD3G-CD3E heterodimer and one CD247 homodimer forming a stable octameric structure. CD3D-CD3E and CD3G-CD3E heterodimers preferentially associate with TR alpha and TR beta chains, respectively. The association of the CD247 homodimer is the last step of TcR assembly in the endoplasmic reticulum and is required for transport to the cell surface.

The protein resides in the cell membrane. Its function is as follows. V region of the variable domain of T cell receptor (TR) beta chain that participates in the antigen recognition. Alpha-beta T cell receptors are antigen specific receptors which are essential to the immune response and are present on the cell surface of T lymphocytes. Recognize peptide-major histocompatibility (MH) (pMH) complexes that are displayed by antigen presenting cells (APC), a prerequisite for efficient T cell adaptive immunity against pathogens. Binding of alpha-beta TR to pMH complex initiates TR-CD3 clustering on the cell surface and intracellular activation of LCK that phosphorylates the ITAM motifs of CD3G, CD3D, CD3E and CD247 enabling the recruitment of ZAP70. In turn ZAP70 phosphorylates LAT, which recruits numerous signaling molecules to form the LAT signalosome. The LAT signalosome propagates signal branching to three major signaling pathways, the calcium, the mitogen-activated protein kinase (MAPK) kinase and the nuclear factor NF-kappa-B (NF-kB) pathways, leading to the mobilization of transcription factors that are critical for gene expression and essential for T cell growth and differentiation. The T cell repertoire is generated in the thymus, by V-(D)-J rearrangement. This repertoire is then shaped by intrathymic selection events to generate a peripheral T cell pool of self-MH restricted, non-autoaggressive T cells. Post-thymic interaction of alpha-beta TR with the pMH complexes shapes TR structural and functional avidity. This is T cell receptor beta variable 29-1 from Homo sapiens (Human).